Here is a 509-residue protein sequence, read N- to C-terminus: Solute carrier family 2, facilitated glucose transporter member 4 (509 aa).

The Cytoplasmic segment spans residues 1-24 (MPSGFQQIGSEDGEPPQQRVTGTL). The interaction with SRFBP1 stretch occupies residues 7-13 (QIGSEDG). Phosphoserine is present on Ser-10. Residues 25–45 (VLAVFSAVLGSLQFGYNIGVI) traverse the membrane as a helical segment. The Extracellular portion of the chain corresponds to 46–81 (NAPQKVIEQSYNETWLGRQGPEGPSSIPPGTLTTLW). N-linked (GlcNAc...) asparagine glycosylation is present at Asn-57. The helical transmembrane segment at 82-102 (ALSVAIFSVGGMISSFLIGII) threads the bilayer. At 103-111 (SQWLGRKRA) the chain is on the cytoplasmic side. Residues 112–132 (MLVNNVLAVLGGSLMGLANAA) form a helical membrane-spanning segment. The Extracellular portion of the chain corresponds to 133 to 142 (ASYEMLILGR). Residues 143–163 (FLIGAYSGLTSGLVPMYVGEI) traverse the membrane as a helical segment. Residues 164-171 (APTHLRGA) lie on the Cytoplasmic side of the membrane. A helical transmembrane segment spans residues 172 to 192 (LGTLNQLAIVIGILIAQVLGL). Position 177 (Gln-177) interacts with D-glucose. Over 193–201 (ESLLGTASL) the chain is Extracellular. The chain crosses the membrane as a helical span at residues 202 to 222 (WPLLLGLTVLPALLQLVLLPF). Residue Cys-223 is the site of S-palmitoyl cysteine attachment. Over 223 to 287 (CPESPRYLYI…LLGSRTHRQP (65 aa)) the chain is Cytoplasmic. At Ser-274 the chain carries Phosphoserine; by SGK1. A helical membrane pass occupies residues 288-308 (LIIAVVLQLSQQLSGINAVFY). D-glucose-binding positions include 298-299 (QQ) and Asn-304. Topologically, residues 309–323 (YSTSIFETAGVGQPA) are extracellular. A helical transmembrane segment spans residues 324-344 (YATIGAGVVNTVFTLVSVLLV). Position 333 (Asn-333) interacts with D-glucose. The Cytoplasmic portion of the chain corresponds to 345-353 (ERAGRRTLH). Residues 354 to 374 (LLGLAGMCGCAILMTVALLLL) form a helical membrane-spanning segment. The Extracellular segment spans residues 375–384 (ERVPAMSYVS). Residues 385–405 (IVAIFGFVAFFEIGPGPIPWF) traverse the membrane as a helical segment. D-glucose contacts are provided by Glu-396 and Trp-404. The Cytoplasmic segment spans residues 406-417 (IVAELFSQGPRP). A helical membrane pass occupies residues 418–438 (AAMAVAGFSNWTSNFIIGMGF). Topologically, residues 439 to 445 (QYVAEAM) are extracellular. The helical transmembrane segment at 446 to 466 (GPYVFLLFAVLLLGFFIFTFL) threads the bilayer. Residues 467 to 509 (RVPETRGRTFDQISAAFHRTPSLLEQEVKPSTELEYLGPDEND) are Cytoplasmic-facing. Phosphothreonine is present on Thr-486. Ser-488 bears the Phosphoserine mark. A Dileucine internalization motif motif is present at residues 489 to 490 (LL).

It belongs to the major facilitator superfamily. Sugar transporter (TC 2.A.1.1) family. Glucose transporter subfamily. Interacts with NDUFA9. Binds to DAXX. Interacts via its N-terminus with SRFBP1. Interacts with TRARG1; the interaction is required for proper SLC2A4 recycling after insulin stimulation. In terms of processing, sumoylated. Palmitoylated. Palmitoylation by ZDHHC7 controls the insulin-dependent translocation of GLUT4 to the plasma membrane. Skeletal and cardiac muscles; brown and white fat.

It localises to the cell membrane. It is found in the endomembrane system. The protein resides in the cytoplasm. The protein localises to the perinuclear region. It catalyses the reaction D-glucose(out) = D-glucose(in). Insulin-regulated facilitative glucose transporter, which plays a key role in removal of glucose from circulation. Response to insulin is regulated by its intracellular localization: in the absence of insulin, it is efficiently retained intracellularly within storage compartments in muscle and fat cells. Upon insulin stimulation, translocates from these compartments to the cell surface where it transports glucose from the extracellular milieu into the cell. The protein is Solute carrier family 2, facilitated glucose transporter member 4 of Homo sapiens (Human).